The primary structure comprises 376 residues: TraB domain-containing protein (376 aa).

The residue at position 1 (Met1) is an N-acetylmethionine. Positions 1-34 (MDGEEQQPPHEANVEPVVPSEASEPVPRVLSGDP) are disordered. The segment covering 14 to 27 (VEPVVPSEASEPVP) has biased composition (low complexity). Thr65 is modified (phosphothreonine).

The sequence is that of TraB domain-containing protein (TRABD) from Homo sapiens (Human).